The sequence spans 473 residues: Photosystem II CP43 reaction center protein (473 aa).

A propeptide spanning residues 1–14 is cleaved from the precursor; sequence MKTLYSLRRFYPVE. Threonine 15 bears the N-acetylthreonine mark. Residue threonine 15 is modified to Phosphothreonine. 5 helical membrane-spanning segments follow: residues 69 to 93, 134 to 155, 178 to 200, 255 to 275, and 291 to 312; these read LFEV…PHLA, LLGP…KDRN, KALY…RKIT, KPFA…LSYS, and WFNN…ASQA. [CaMn4O5] cluster is bound at residue glutamate 367. Residues 447-471 form a helical membrane-spanning segment; sequence RARAAAAGFEKGIDRDFEPVLSMTP.

It belongs to the PsbB/PsbC family. PsbC subfamily. In terms of assembly, PSII is composed of 1 copy each of membrane proteins PsbA, PsbB, PsbC, PsbD, PsbE, PsbF, PsbH, PsbI, PsbJ, PsbK, PsbL, PsbM, PsbT, PsbX, PsbY, PsbZ, Psb30/Ycf12, at least 3 peripheral proteins of the oxygen-evolving complex and a large number of cofactors. It forms dimeric complexes. Requires Binds multiple chlorophylls and provides some of the ligands for the Ca-4Mn-5O cluster of the oxygen-evolving complex. It may also provide a ligand for a Cl- that is required for oxygen evolution. PSII binds additional chlorophylls, carotenoids and specific lipids. as cofactor.

The protein localises to the plastid. Its subcellular location is the chloroplast thylakoid membrane. In terms of biological role, one of the components of the core complex of photosystem II (PSII). It binds chlorophyll and helps catalyze the primary light-induced photochemical processes of PSII. PSII is a light-driven water:plastoquinone oxidoreductase, using light energy to abstract electrons from H(2)O, generating O(2) and a proton gradient subsequently used for ATP formation. The sequence is that of Photosystem II CP43 reaction center protein from Vitis vinifera (Grape).